Consider the following 191-residue polypeptide: MYIAIEGIDTAGKSTQIAKLQEHFSDAIITKEPGGTEAGKEIREIVLNAKIKSKKAEFLLFLADRAEHIQEVIEPNLSKMIISDRSVVSGVAYALVQGEISETAILHLNRFATGGIYPQKIFLLQLTNEELSLRLSQKKLDGIELRGIEYLLKIQDALIKASNLLNIELVLIDATKNIDSITQEILNNINI.

7 to 14 (GIDTAGKS) is a binding site for ATP.

Belongs to the thymidylate kinase family.

It catalyses the reaction dTMP + ATP = dTDP + ADP. Functionally, phosphorylation of dTMP to form dTDP in both de novo and salvage pathways of dTTP synthesis. The polypeptide is Thymidylate kinase (Sulfurimonas denitrificans (strain ATCC 33889 / DSM 1251) (Thiomicrospira denitrificans (strain ATCC 33889 / DSM 1251))).